A 226-amino-acid polypeptide reads, in one-letter code: uncharacterized protein (226 aa).

This is an uncharacterized protein from Caenorhabditis elegans.